Here is a 407-residue protein sequence, read N- to C-terminus: Aurora kinase (407 aa).

Disordered regions lie at residues 1 to 43 (MTPT…STSS) and 66 to 137 (ERQG…TQSK). Composition is skewed to low complexity over residues 31–43 (SAST…STSS) and 126–136 (STTTTMTSTQS). A Protein kinase domain is found at 147-399 (FDIGRPLGKG…LEGVIAHAWI (253 aa)). Residues Lys157, Lys176, and 224–227 (LEYA) contribute to the ATP site. Asp272 (proton acceptor) is an active-site residue. Asp290 is a binding site for ATP.

This sequence belongs to the protein kinase superfamily. Ser/Thr protein kinase family.

It is found in the cytoplasm. The protein localises to the cytoskeleton. The protein resides in the spindle. Its subcellular location is the midbody. It localises to the microtubule organizing center. It is found in the centrosome. The protein localises to the nucleus. The protein resides in the chromosome. Its subcellular location is the centromere. It catalyses the reaction L-seryl-[protein] + ATP = O-phospho-L-seryl-[protein] + ADP + H(+). The catalysed reaction is L-threonyl-[protein] + ATP = O-phospho-L-threonyl-[protein] + ADP + H(+). Its activity is regulated as follows. Cdc2 activity is required for activation. Its function is as follows. Serine/threonine protein kinase that contributes to the regulation of cell cycle progression. Involved in meiotic apparatus formation and polar body extrusion. Contributes to Plk1 activation and phosphorylation of histone H3 at 'Ser-10' during meiosis I. Required for accurate progression of early embryonic M phase. Involved in chromosome alignment and cleavage furrow formation during early embryonic cycles. May be involved in mitotic spindle formation and cytokinesis. In Patiria pectinifera (Starfish), this protein is Aurora kinase.